A 337-amino-acid polypeptide reads, in one-letter code: Holliday junction branch migration complex subunit RuvB (337 aa).

Positions 1–180 (MTRLISADKS…FGVISRLEFY (180 aa)) are large ATPase domain (RuvB-L). ATP is bound by residues Leu19, Arg20, Gly61, Lys64, Thr65, Thr66, 127–129 (EDF), Arg170, Tyr180, and Arg217. Thr65 contacts Mg(2+). Residues 181-251 (THDELAFIIT…VADQALALLE (71 aa)) form a small ATPAse domain (RuvB-S) region. A head domain (RuvB-H) region spans residues 254 to 337 (EMGFDMMDRA…APEPPQGKLF (84 aa)). Residues Arg309 and Arg314 each contribute to the DNA site.

Belongs to the RuvB family. In terms of assembly, homohexamer. Forms an RuvA(8)-RuvB(12)-Holliday junction (HJ) complex. HJ DNA is sandwiched between 2 RuvA tetramers; dsDNA enters through RuvA and exits via RuvB. An RuvB hexamer assembles on each DNA strand where it exits the tetramer. Each RuvB hexamer is contacted by two RuvA subunits (via domain III) on 2 adjacent RuvB subunits; this complex drives branch migration. In the full resolvosome a probable DNA-RuvA(4)-RuvB(12)-RuvC(2) complex forms which resolves the HJ.

It localises to the cytoplasm. The catalysed reaction is ATP + H2O = ADP + phosphate + H(+). Its function is as follows. The RuvA-RuvB-RuvC complex processes Holliday junction (HJ) DNA during genetic recombination and DNA repair, while the RuvA-RuvB complex plays an important role in the rescue of blocked DNA replication forks via replication fork reversal (RFR). RuvA specifically binds to HJ cruciform DNA, conferring on it an open structure. The RuvB hexamer acts as an ATP-dependent pump, pulling dsDNA into and through the RuvAB complex. RuvB forms 2 homohexamers on either side of HJ DNA bound by 1 or 2 RuvA tetramers; 4 subunits per hexamer contact DNA at a time. Coordinated motions by a converter formed by DNA-disengaged RuvB subunits stimulates ATP hydrolysis and nucleotide exchange. Immobilization of the converter enables RuvB to convert the ATP-contained energy into a lever motion, pulling 2 nucleotides of DNA out of the RuvA tetramer per ATP hydrolyzed, thus driving DNA branch migration. The RuvB motors rotate together with the DNA substrate, which together with the progressing nucleotide cycle form the mechanistic basis for DNA recombination by continuous HJ branch migration. Branch migration allows RuvC to scan DNA until it finds its consensus sequence, where it cleaves and resolves cruciform DNA. In Geobacter sp. (strain M21), this protein is Holliday junction branch migration complex subunit RuvB.